A 187-amino-acid chain; its full sequence is Protein GrpE (187 aa).

The disordered stretch occupies residues methionine 1 to threonine 23.

Belongs to the GrpE family. Homodimer.

It is found in the cytoplasm. Its function is as follows. Participates actively in the response to hyperosmotic and heat shock by preventing the aggregation of stress-denatured proteins, in association with DnaK and GrpE. It is the nucleotide exchange factor for DnaK and may function as a thermosensor. Unfolded proteins bind initially to DnaJ; upon interaction with the DnaJ-bound protein, DnaK hydrolyzes its bound ATP, resulting in the formation of a stable complex. GrpE releases ADP from DnaK; ATP binding to DnaK triggers the release of the substrate protein, thus completing the reaction cycle. Several rounds of ATP-dependent interactions between DnaJ, DnaK and GrpE are required for fully efficient folding. The polypeptide is Protein GrpE (Mesoplasma florum (strain ATCC 33453 / NBRC 100688 / NCTC 11704 / L1) (Acholeplasma florum)).